The primary structure comprises 510 residues: Maturase K (510 aa).

Belongs to the intron maturase 2 family. MatK subfamily.

The protein resides in the plastid. It is found in the chloroplast. Usually encoded in the trnK tRNA gene intron. Probably assists in splicing its own and other chloroplast group II introns. This chain is Maturase K, found in Grahamia bracteata.